Consider the following 230-residue polypeptide: MKTIGLLGGMSWESTIPYYRLINEGIKQRLGGLHSAQVLLHSVDFHEIEECQRRGEWDKTGDILAEAALGLQRAGAEGIVLCTNTMHKVADAIESRCTLPFLHIADATGRAITGAGMTRVALLGTRYTMEQDFYRGRLTEQFSINCLIPEADERAKINQIIFEELCLGQFTEASRAYCAQVIARLAEQGAQGVIFGCTEIGLLVPEERSVLPVFDTAAIHAEDAVAFMLS.

Substrate contacts are provided by residues methionine 10, glutamine 52, and 83-85 (TNT). Catalysis depends on threonine 83, which acts as the Proton donor. Catalysis depends on cysteine 197, which acts as the Proton acceptor. Residue 198 to 199 (TE) coordinates substrate.

It belongs to the aspartate/glutamate racemases family.

It carries out the reaction an L-alpha-amino acid = a D-alpha-amino acid. It catalyses the reaction L-homoserine = D-homoserine. In terms of biological role, amino-acid racemase able to utilize a broad range of substrates. Highest activity is observed with L-homoserine and D-homoserine. Has tenfold lower activity against L-methionine, L-leucine, L-valine and L-histidine. Has low activity with L-norvaline, L-asparagine, D-methionine, L-aminobutyric acid, L-isoleucine, L-serine, L-norleucine, L-alanine, L-glutamine, LL-diaminopimelic acid and L-phenylalanine. Has no activity against ten L-amino acids (Thr, Glu, Asp, Arg, Lys, Tyr, Trp, Orn, Cit and Aad). D-amino acids might be used as components of peptidoglycan and/or be involved in peptidoglycan metabolism and remodeling. The sequence is that of Broad specificity amino-acid racemase YgeA (ygeA) from Escherichia coli (strain K12).